We begin with the raw amino-acid sequence, 190 residues long: Putative serine carboxypeptidase-like 54 (190 aa).

A signal peptide spans 1 to 25 (MATKTFSLPFLLIVCIFSQLSSTFG). N-linked (GlcNAc...) asparagine glycans are attached at residues Asn-58, Asn-59, and Asn-105.

The protein belongs to the peptidase S10 family.

It is found in the secreted. This is Putative serine carboxypeptidase-like 54 (SCPL54) from Arabidopsis thaliana (Mouse-ear cress).